The sequence spans 339 residues: Ketol-acid reductoisomerase (NADP(+)) (339 aa).

Residues Met1–Thr182 enclose the KARI N-terminal Rossmann domain. Residues Tyr24–Gln27, Arg48, Ser51, Thr53, and Asp83–Gln86 contribute to the NADP(+) site. The active site involves His108. Gly134 is a binding site for NADP(+). Residues Ser183–Ile328 enclose the KARI C-terminal knotted domain. Residues Asp191, Glu195, Glu227, and Glu231 each contribute to the Mg(2+) site. Ser252 is a substrate binding site.

This sequence belongs to the ketol-acid reductoisomerase family. The cofactor is Mg(2+).

The catalysed reaction is (2R)-2,3-dihydroxy-3-methylbutanoate + NADP(+) = (2S)-2-acetolactate + NADPH + H(+). It catalyses the reaction (2R,3R)-2,3-dihydroxy-3-methylpentanoate + NADP(+) = (S)-2-ethyl-2-hydroxy-3-oxobutanoate + NADPH + H(+). The protein operates within amino-acid biosynthesis; L-isoleucine biosynthesis; L-isoleucine from 2-oxobutanoate: step 2/4. Its pathway is amino-acid biosynthesis; L-valine biosynthesis; L-valine from pyruvate: step 2/4. Functionally, involved in the biosynthesis of branched-chain amino acids (BCAA). Catalyzes an alkyl-migration followed by a ketol-acid reduction of (S)-2-acetolactate (S2AL) to yield (R)-2,3-dihydroxy-isovalerate. In the isomerase reaction, S2AL is rearranged via a Mg-dependent methyl migration to produce 3-hydroxy-3-methyl-2-ketobutyrate (HMKB). In the reductase reaction, this 2-ketoacid undergoes a metal-dependent reduction by NADPH to yield (R)-2,3-dihydroxy-isovalerate. The chain is Ketol-acid reductoisomerase (NADP(+)) from Rhodopseudomonas palustris (strain HaA2).